Here is a 153-residue protein sequence, read N- to C-terminus: Protein SprT-like (153 aa).

One can recognise a SprT-like domain in the interval 7–145; that stretch reads QTLVEKISIV…VCGKCHGRLS (139 aa). Histidine 67 provides a ligand contact to Zn(2+). Glutamate 68 is a catalytic residue. Histidine 71 provides a ligand contact to Zn(2+).

Belongs to the SprT family. The cofactor is Zn(2+).

The protein localises to the cytoplasm. The polypeptide is Protein SprT-like (Enterococcus faecalis (strain ATCC 700802 / V583)).